Reading from the N-terminus, the 83-residue chain is Retinal cone rhodopsin-sensitive cGMP 3',5'-cyclic phosphodiesterase subunit gamma (83 aa).

Residues 1–54 (MSDSPSLSPPAPSQGPTTPRKGPPKFKQRQTRQFKSKPPKKGVKGFGDDIPGME) form a disordered region. Residues 22-43 (GPPKFKQRQTRQFKSKPPKKGV) show a composition bias toward basic residues.

This sequence belongs to the rod/cone cGMP-PDE gamma subunit family. Tetramer composed of two catalytic chains (alpha and beta), and two inhibitory chains (gamma).

It catalyses the reaction 3',5'-cyclic GMP + H2O = GMP + H(+). Participates in processes of transmission and amplification of the visual signal. cGMP-PDEs are the effector molecules in G-protein-mediated phototransduction in vertebrate rods and cones. The sequence is that of Retinal cone rhodopsin-sensitive cGMP 3',5'-cyclic phosphodiesterase subunit gamma (Pde6h) from Mus musculus (Mouse).